We begin with the raw amino-acid sequence, 259 residues long: Diaminopimelate epimerase (259 aa).

Substrate is bound by residues Asn14, Gln42, and Asn60. Cys69 functions as the Proton donor in the catalytic mechanism. Substrate is bound by residues 70-71 (GN), Asn151, Asn184, and 202-203 (ER). Cys211 functions as the Proton acceptor in the catalytic mechanism. Residue 212-213 (GS) participates in substrate binding.

It belongs to the diaminopimelate epimerase family. Homodimer.

It localises to the cytoplasm. It carries out the reaction (2S,6S)-2,6-diaminopimelate = meso-2,6-diaminopimelate. Its pathway is amino-acid biosynthesis; L-lysine biosynthesis via DAP pathway; DL-2,6-diaminopimelate from LL-2,6-diaminopimelate: step 1/1. Its function is as follows. Catalyzes the stereoinversion of LL-2,6-diaminopimelate (L,L-DAP) to meso-diaminopimelate (meso-DAP), a precursor of L-lysine and an essential component of the bacterial peptidoglycan. The polypeptide is Diaminopimelate epimerase (Wolbachia sp. subsp. Brugia malayi (strain TRS)).